We begin with the raw amino-acid sequence, 815 residues long: uncharacterized protein (815 aa).

A signal peptide spans 1–21; sequence MNIYRLSFVSCLVMAMPCAMA. C795 and C814 are oxidised to a cystine.

It belongs to the fimbrial export usher family.

It localises to the cell outer membrane. Could be involved in the export and assembly of the putative YbgD fimbrial subunit across the outer membrane. This is an uncharacterized protein from Escherichia coli (strain K12).